A 267-amino-acid chain; its full sequence is Hydroxyethylthiazole kinase 2 (267 aa).

Met-41 contributes to the substrate binding site. Lys-116 and Thr-166 together coordinate ATP. Gly-193 contacts substrate.

It belongs to the Thz kinase family. Requires Mg(2+) as cofactor.

It carries out the reaction 5-(2-hydroxyethyl)-4-methylthiazole + ATP = 4-methyl-5-(2-phosphooxyethyl)-thiazole + ADP + H(+). The protein operates within cofactor biosynthesis; thiamine diphosphate biosynthesis; 4-methyl-5-(2-phosphoethyl)-thiazole from 5-(2-hydroxyethyl)-4-methylthiazole: step 1/1. Functionally, catalyzes the phosphorylation of the hydroxyl group of 4-methyl-5-beta-hydroxyethylthiazole (THZ). The chain is Hydroxyethylthiazole kinase 2 from Streptococcus pneumoniae (strain Taiwan19F-14).